Here is a 179-residue protein sequence, read N- to C-terminus: Inner membrane-spanning protein YciB (179 aa).

Transmembrane regions (helical) follow at residues 22 to 42 (IYAATSALIVATAIVLIYSWV), 50 to 70 (MALITFVLVAVFGGLTLFFHN), 76 to 96 (WKVTVIYALFAGALLMSQWVM), 121 to 141 (LAWALFFIVCGLANIYIAFWL), and 149 to 169 (FKVFGLTALTLIFTLLSGVYI).

It belongs to the YciB family.

Its subcellular location is the cell inner membrane. Functionally, plays a role in cell envelope biogenesis, maintenance of cell envelope integrity and membrane homeostasis. This Salmonella arizonae (strain ATCC BAA-731 / CDC346-86 / RSK2980) protein is Inner membrane-spanning protein YciB.